The chain runs to 589 residues: Proline--tRNA ligase (589 aa).

This sequence belongs to the class-II aminoacyl-tRNA synthetase family. ProS type 1 subfamily. In terms of assembly, homodimer.

The protein localises to the cytoplasm. It carries out the reaction tRNA(Pro) + L-proline + ATP = L-prolyl-tRNA(Pro) + AMP + diphosphate. Catalyzes the attachment of proline to tRNA(Pro) in a two-step reaction: proline is first activated by ATP to form Pro-AMP and then transferred to the acceptor end of tRNA(Pro). As ProRS can inadvertently accommodate and process non-cognate amino acids such as alanine and cysteine, to avoid such errors it has two additional distinct editing activities against alanine. One activity is designated as 'pretransfer' editing and involves the tRNA(Pro)-independent hydrolysis of activated Ala-AMP. The other activity is designated 'posttransfer' editing and involves deacylation of mischarged Ala-tRNA(Pro). The misacylated Cys-tRNA(Pro) is not edited by ProRS. This Corynebacterium aurimucosum (strain ATCC 700975 / DSM 44827 / CIP 107346 / CN-1) (Corynebacterium nigricans) protein is Proline--tRNA ligase.